A 202-amino-acid polypeptide reads, in one-letter code: Snake venom metalloproteinase fibrolase (202 aa).

The Peptidase M12B domain maps to 6-202; sequence RYIELVIVAD…HNPQCILNQP (197 aa). Glu9 provides a ligand contact to Ca(2+). Asn25 is a glycosylation site (N-linked (GlcNAc...) asparagine). Asp93 serves as a coordination point for Ca(2+). Disulfide bonds link Cys117–Cys197, Cys157–Cys181, and Cys159–Cys164. His142 lines the Zn(2+) pocket. Glu143 is a catalytic residue. 2 residues coordinate Zn(2+): His146 and His152. Cys197 and Asn200 together coordinate Ca(2+).

This sequence belongs to the venom metalloproteinase (M12B) family. P-I subfamily. In terms of assembly, monomer. Zn(2+) serves as cofactor. Glycosylated. Expressed by the venom gland.

The protein localises to the secreted. The enzyme catalyses Hydrolysis of 14-Ala-|-Leu-15 in insulin B chain and 413-Lys-|-Leu-414 in alpha-chain of fibrinogen.. Activated by calcium and magnesium ions. Inhibited by EDTA, DTT and L-cysteine. Activity is not affected by PMSF or heparin. In terms of biological role, has fibrino(geno)lytic activity on the alpha and beta chains of fibrinogen (FGA and FGB). Inhibits human ADP- and collagen-induced platelet aggregation on platelet-rich plasma but does not affect the thrombin-induced aggregation of rabbit washed platelets. Slightly degrades plasminogen. The chain is Snake venom metalloproteinase fibrolase from Macrovipera lebetinus (Levantine viper).